We begin with the raw amino-acid sequence, 69 residues long: Omega-oxotoxin-Ol1a (69 aa).

One can recognise an Oxytoxin-type inhibitor cystine knot (ICK) domain in the interval 1-68 (DWECLPLHSS…GKINTCDKYK (68 aa)). 5 cysteine pairs are disulfide-bonded: Cys4–Cys18, Cys11–Cys23, Cys15–Cys64, Cys17–Cys52, and Cys25–Cys50. The residue at position 69 (Asn69) is an Asparagine amide.

The protein belongs to the spiderine family. Spiderine subfamily. Expressed by the venom gland.

The protein localises to the secreted. Its function is as follows. Weak blocker of vertebrate P/Q-, N- and L-type voltage-gated calcium channels (Cav1 and Cav2). Is both paralytic and lethal when injected into lepidopteran larvae. Is not toxic to mice. This Oxyopes lineatus (Lynx spider) protein is Omega-oxotoxin-Ol1a.